The following is a 296-amino-acid chain: Protoheme IX farnesyltransferase 1 (296 aa).

Helical transmembrane passes span 14–34, 41–61, 86–106, 108–128, 141–161, 165–185, 230–250, and 274–294; these read IVLLLVITAVTTMYAGDALSA, LWDYAHLMAAGALASAGSSAL, IGENIVLAYGLAISSAAVVYA, FLLNAPTAFFIALGIFSYVII, IVIGGIAGSAASWAGWTAATG, LLGFLIGFLVFVWTPSHFWCL, AFGMGLVYLVIAVASGGLMLV, and YLTIIFAAVALDAAFHYPFPF.

Belongs to the UbiA prenyltransferase family. Protoheme IX farnesyltransferase subfamily.

The protein localises to the cell membrane. The catalysed reaction is heme b + (2E,6E)-farnesyl diphosphate + H2O = Fe(II)-heme o + diphosphate. It functions in the pathway porphyrin-containing compound metabolism; heme O biosynthesis; heme O from protoheme: step 1/1. Its function is as follows. Converts heme B (protoheme IX) to heme O by substitution of the vinyl group on carbon 2 of heme B porphyrin ring with a hydroxyethyl farnesyl side group. The sequence is that of Protoheme IX farnesyltransferase 1 from Cenarchaeum symbiosum (strain A).